The following is a 360-amino-acid chain: Chorismate synthase (360 aa).

NADP(+)-binding residues include R48 and R54. Residues 125–127 (RSS), 246–247 (NA), G286, 301–305 (KPTSS), and R327 each bind FMN.

The protein belongs to the chorismate synthase family. As to quaternary structure, homotetramer. FMNH2 serves as cofactor.

The catalysed reaction is 5-O-(1-carboxyvinyl)-3-phosphoshikimate = chorismate + phosphate. The protein operates within metabolic intermediate biosynthesis; chorismate biosynthesis; chorismate from D-erythrose 4-phosphate and phosphoenolpyruvate: step 7/7. Its function is as follows. Catalyzes the anti-1,4-elimination of the C-3 phosphate and the C-6 proR hydrogen from 5-enolpyruvylshikimate-3-phosphate (EPSP) to yield chorismate, which is the branch point compound that serves as the starting substrate for the three terminal pathways of aromatic amino acid biosynthesis. This reaction introduces a second double bond into the aromatic ring system. In Haemophilus ducreyi (strain 35000HP / ATCC 700724), this protein is Chorismate synthase.